The chain runs to 242 residues: Endoglucanase-5 (242 aa).

An N-terminal signal peptide occupies residues 1–17 (MKATLVLGSLIVGAVSA). Residues 18–182 (YKATTTRYYD…ETDPTPVLGN (165 aa)) are catalytic. The active-site Nucleophile is D27. The Proton donor role is filled by D134. The disordered stretch occupies residues 177–206 (TPVLGNDTGSTPPGSSPPATSSSPPSGGGQ). N-linked (GlcNAc...) asparagine glycosylation occurs at N182. Residues 184–201 (TGSTPPGSSPPATSSSPP) are compositionally biased toward low complexity. The CBM1 domain maps to 205 to 241 (GQQTLYGQCGGAGWTGPTTCQAPGTCKVQNQWYSQCL). 2 disulfide bridges follow: C213–C230 and C224–C240.

The protein belongs to the glycosyl hydrolase 45 (cellulase K) family.

It carries out the reaction Endohydrolysis of (1-&gt;4)-beta-D-glucosidic linkages in cellulose, lichenin and cereal beta-D-glucans.. The sequence is that of Endoglucanase-5 (egl5) from Hypocrea jecorina (Trichoderma reesei).